We begin with the raw amino-acid sequence, 503 residues long: Potassium voltage-gated channel subfamily V member 1 (503 aa).

Disordered regions lie at residues 1–20 (MDLS…DSGS) and 171–192 (KKDT…KGPC). Residues 3–213 (LSPRNRPLLD…EKPGSSTAAR (211 aa)) lie on the Cytoplasmic side of the membrane. The segment covering 10-20 (LLDSSSLDSGS) has biased composition (low complexity). The segment covering 171 to 187 (KKDTDDQESQHESEQDF) has biased composition (basic and acidic residues). The chain crosses the membrane as a helical span at residues 214–234 (IFGVISIIFVAVSIVNMALMS). The Extracellular portion of the chain corresponds to 235–241 (AELSWLN). Residues 242-262 (LQLLEILEYVCISWFTGEFVL) traverse the membrane as a helical segment. The Cytoplasmic portion of the chain corresponds to 263–279 (RFLCVKDRCHFLRKVPN). A helical membrane pass occupies residues 280–300 (IIDLLAILPFYITLLVESLSG). The Extracellular segment spans residues 301–312 (SHTTQELENVGR). The chain crosses the membrane as a helical; Voltage-sensor span at residues 313-334 (LVQVLRLLRALRMLKLGRHSTG). Over 335-348 (LRSLGMTITQCYEE) the chain is Cytoplasmic. The helical transmembrane segment at 349–369 (VGLLLLFLSVGISIFSTIEYF) threads the bilayer. Positions 395–400 (TVGYGD) match the Selectivity filter motif. The helical transmembrane segment at 410 to 430 (IVAFMCILSGILVLALPIAII) threads the bilayer. At 431–503 (NDRFSACYFT…RSSGGDDFWF (73 aa)) the chain is on the cytoplasmic side.

The protein belongs to the potassium channel family. V (TC 1.A.1.2) subfamily. Kv8.1/KCNV1 sub-subfamily. Heteromultimer with KCNB1 and KCNB2. Interacts with KCNC4 and KCND1.

It is found in the cell membrane. Its function is as follows. Potassium channel subunit that does not form functional channels by itself. Modulates KCNB1 and KCNB2 channel activity by shifting the threshold for inactivation to more negative values and by slowing the rate of inactivation. Can down-regulate the channel activity of KCNB1, KCNB2, KCNC4 and KCND1, possibly by trapping them in intracellular membranes. The protein is Potassium voltage-gated channel subfamily V member 1 (Kcnv1) of Mus musculus (Mouse).